Reading from the N-terminus, the 343-residue chain is tRNA N6-adenosine threonylcarbamoyltransferase (343 aa).

Residues His108 and His112 each coordinate Fe cation. Residues 129–133 (LISGG), Asp161, Glu178, and Ser258 contribute to the substrate site. Asp286 contributes to the Fe cation binding site.

This sequence belongs to the KAE1 / TsaD family. Fe(2+) is required as a cofactor.

It is found in the cytoplasm. It catalyses the reaction L-threonylcarbamoyladenylate + adenosine(37) in tRNA = N(6)-L-threonylcarbamoyladenosine(37) in tRNA + AMP + H(+). In terms of biological role, required for the formation of a threonylcarbamoyl group on adenosine at position 37 (t(6)A37) in tRNAs that read codons beginning with adenine. Is probably involved in the transfer of the threonylcarbamoyl moiety of threonylcarbamoyl-AMP (TC-AMP) to the N6 group of A37. In Pyrobaculum aerophilum (strain ATCC 51768 / DSM 7523 / JCM 9630 / CIP 104966 / NBRC 100827 / IM2), this protein is tRNA N6-adenosine threonylcarbamoyltransferase.